The following is a 227-amino-acid chain: D-lyxose/D-mannose isomerase (227 aa).

D-fructose-binding positions include Lys90, 103–110, His171, Glu186, and Asp193; that span reads HFHWRKRE. Mn(2+) is bound by residues His103, His105, Glu110, and His171.

It belongs to the D-lyxose ketol-isomerase family. In terms of assembly, homodimer; disulfide-linked. Dimerization is facilitated through a disulfide bond between the two monomers of the dimeric enzyme. It depends on Mn(2+) as a cofactor.

It carries out the reaction D-lyxose = D-xylulose. The catalysed reaction is D-mannose = D-fructose. Its function is as follows. Sugar isomerase that catalyzes the reversible isomerization of D-lyxose to D-xylulose, and D-mannose to D-fructose. Shows similar activity toward D-lyxose and D-mannose with a turnover and catalytic efficiency for D-lyxose as a substrate only 1.1- and 1.3-fold higher than those for D-mannose, respectively. Shows weaker activity with L-gulose, D-talose, L-ribose and L-allose. Overexpression enables cell growth on the rare pentose D-lyxose as the sole carbon source. The polypeptide is D-lyxose/D-mannose isomerase (Escherichia coli O157:H7).